A 189-amino-acid chain; its full sequence is Elongation factor P (189 aa).

Lysine 34 carries the post-translational modification N6-(3,6-diaminohexanoyl)-5-hydroxylysine.

It belongs to the elongation factor P family. In terms of processing, may be beta-lysylated on the epsilon-amino group of Lys-34 by the combined action of EpmA and EpmB, and then hydroxylated on the C5 position of the same residue by EpmC (if this protein is present). Lysylation is critical for the stimulatory effect of EF-P on peptide-bond formation. The lysylation moiety may extend toward the peptidyltransferase center and stabilize the terminal 3-CCA end of the tRNA. Hydroxylation of the C5 position on Lys-34 may allow additional potential stabilizing hydrogen-bond interactions with the P-tRNA.

The protein resides in the cytoplasm. It participates in protein biosynthesis; polypeptide chain elongation. Functionally, involved in peptide bond synthesis. Alleviates ribosome stalling that occurs when 3 or more consecutive Pro residues or the sequence PPG is present in a protein, possibly by augmenting the peptidyl transferase activity of the ribosome. Modification of Lys-34 is required for alleviation. This chain is Elongation factor P, found in Baumannia cicadellinicola subsp. Homalodisca coagulata.